The following is an 856-amino-acid chain: Rab effector MyRIP (856 aa).

The RabBD domain occupies 4 to 124; that stretch reads KLDLSGLTDD…TQSLEWFYNN (121 aa). The FYVE-type zinc finger occupies 63 to 105; that stretch reads CCMRCCSPFTFLVNARRRCGECKFSVCKSCCSYQKHEKLWVCC. Residues 143-560 form a myosin-binding region; that stretch reads KKHRLESGAC…AQVSDNVSET (418 aa). The PKA-binding stretch occupies residues 193 to 209; that stretch reads VALQVAEEAIEEAISKA. Residues 232 to 248 form a negative regulation of PKA-binding region; it reads LAEELAGTILQRIIRKQ. The segment at 251 to 287 is disordered; it reads KADLHAEEEEPECTRPQSSGVKARGEGTAAPPGRHKA. Ser299 is subject to Phosphoserine. Polar residues predominate over residues 302–311; it reads TEDTLKTSSA. Disordered regions lie at residues 302–323, 350–376, 392–578, 592–625, 778–805, and 826–845; these read TEDT…DRAQ, QSPD…KPKS, YDEL…SAEE, SEKE…NNQG, RRDQ…APPV, and LLQG…TKDL. At Ser351 the chain carries Phosphoserine. Residues 395 to 405 are compositionally biased toward acidic residues; the sequence is LGSDSEEDFDY. Composition is skewed to low complexity over residues 427–437 and 450–460; these read PAQAQSSGQGP and SDSETSSTSSS. Residues 495–856 are actin-binding; the sequence is FNPQAAGGET…EPVLESAVMY (362 aa). Polar residues-rich tracts occupy residues 551–574, 613–625, 784–793, and 826–843; these read AQVS…SSTD, QKGS…NNQG, RSQVQTIDTS, and LLQG…SNTK.

In terms of assembly, binds MYO5A, MYO7A and F-actin. Binds RAB27A that has been activated by GTP-binding via its N-terminus. Interacts with PRKAR2A. Interacts with components of the exocyst complex, including EXOC3 and EXOC4.

Its subcellular location is the cytoplasm. The protein localises to the perinuclear region. It is found in the cytoplasmic vesicle. The protein resides in the secretory vesicle. It localises to the melanosome. Functionally, rab effector protein involved in melanosome transport. Serves as link between melanosome-bound RAB27A and the motor proteins MYO5A and MYO7A. May link RAB27A-containing vesicles to actin filaments. Functions as a protein kinase A-anchoring protein (AKAP). May act as a scaffolding protein that links PKA to components of the exocytosis machinery, thus facilitating exocytosis, including insulin release. This is Rab effector MyRIP (Myrip) from Rattus norvegicus (Rat).